Reading from the N-terminus, the 132-residue chain is Small ribosomal subunit protein uS8 (132 aa).

This sequence belongs to the universal ribosomal protein uS8 family. In terms of assembly, part of the 30S ribosomal subunit. Contacts proteins S5 and S12.

Its function is as follows. One of the primary rRNA binding proteins, it binds directly to 16S rRNA central domain where it helps coordinate assembly of the platform of the 30S subunit. The chain is Small ribosomal subunit protein uS8 from Xylella fastidiosa (strain M12).